Consider the following 178-residue polypeptide: Large ribosomal subunit protein uL6 (178 aa).

This sequence belongs to the universal ribosomal protein uL6 family. Part of the 50S ribosomal subunit.

In terms of biological role, this protein binds to the 23S rRNA, and is important in its secondary structure. It is located near the subunit interface in the base of the L7/L12 stalk, and near the tRNA binding site of the peptidyltransferase center. This is Large ribosomal subunit protein uL6 from Corynebacterium urealyticum (strain ATCC 43042 / DSM 7109).